A 103-amino-acid chain; its full sequence is SLC35A4 upstream open reading frame protein (103 aa).

A helical membrane pass occupies residues 62 to 84 (ASAVLGFAVGTCTGIYAAQAYAV).

It localises to the mitochondrion inner membrane. Functionally, required to maintain cellular respiration. This Homo sapiens (Human) protein is SLC35A4 upstream open reading frame protein.